The primary structure comprises 286 residues: Energy-coupling factor transporter ATP-binding protein EcfA2 (286 aa).

In terms of domain architecture, ABC transporter spans 3-246 (IRFDNVSYTY…KKKLADWHIG (244 aa)). 40-47 (GQTGSGKS) lines the ATP pocket.

This sequence belongs to the ABC transporter superfamily. Energy-coupling factor EcfA family. As to quaternary structure, forms a stable energy-coupling factor (ECF) transporter complex composed of 2 membrane-embedded substrate-binding proteins (S component), 2 ATP-binding proteins (A component) and 2 transmembrane proteins (T component).

It is found in the cell membrane. ATP-binding (A) component of a common energy-coupling factor (ECF) ABC-transporter complex. Unlike classic ABC transporters this ECF transporter provides the energy necessary to transport a number of different substrates. This is Energy-coupling factor transporter ATP-binding protein EcfA2 from Staphylococcus aureus (strain USA300).